The primary structure comprises 742 residues: Phosphatidylinositol 4-phosphate 5-kinase its3 (742 aa).

Disordered regions lie at residues 1–21 (MKIDSNGIVNPHSITNEIPSY) and 82–228 (LFKE…PDIG). Low complexity-rich tracts occupy residues 90 to 105 (PSNPTAHSPSSSSNDS) and 129 to 142 (PSSNSSSSPQLQNL). Composition is skewed to polar residues over residues 158 to 181 (RSSSNPVTSSQQPPNDRSTLSSSQ) and 193 to 218 (EKNSSNAEPSGSRSGDRGTNVSTSGS). The PIPK domain occupies 264–662 (GHENYVTAYN…RFYKFVESSI (399 aa)). Residues 677–742 (QDGQRVNKQQ…RNVTTNTSSS (66 aa)) form a disordered region. A compositionally biased stretch (polar residues) spans 680–719 (QRVNKQQSVNAGNVRTNNKHGSLNNNTAPSSRNAKSTSAH).

Interacts with opy1 (via domain PH 1); the interaction is direct but opy1 does not appear to regulate its3 localization or function. Phosphorylated by casein kinase I. Phosphorylation inactivates the enzyme.

It localises to the cell membrane. The enzyme catalyses a 1,2-diacyl-sn-glycero-3-phospho-(1D-myo-inositol 4-phosphate) + ATP = a 1,2-diacyl-sn-glycero-3-phospho-(1D-myo-inositol-4,5-bisphosphate) + ADP + H(+). In terms of biological role, catalyzes the phosphorylation of phosphatidylinositol 4-phosphate on the fifth hydroxyl of the myo-inositol ring, to form phosphatidylinositol 4,5-bisphosphate. Involved, together with the calcineurin ppb1, in cytokinesis. This is Phosphatidylinositol 4-phosphate 5-kinase its3 (its3) from Schizosaccharomyces pombe (strain 972 / ATCC 24843) (Fission yeast).